Reading from the N-terminus, the 116-residue chain is Iron-sulfur cluster insertion protein ErpA (116 aa).

Residues Cys44, Cys108, and Cys110 each contribute to the iron-sulfur cluster site.

This sequence belongs to the HesB/IscA family. As to quaternary structure, homodimer. Iron-sulfur cluster serves as cofactor.

Required for insertion of 4Fe-4S clusters for at least IspG. This chain is Iron-sulfur cluster insertion protein ErpA, found in Shewanella sp. (strain ANA-3).